A 97-amino-acid polypeptide reads, in one-letter code: Integration host factor subunit alpha (97 aa).

Positions 49-71 (FGNFDLRDKNQRPGRNPKTGEDI) are disordered.

Belongs to the bacterial histone-like protein family. As to quaternary structure, heterodimer of an alpha and a beta chain.

This protein is one of the two subunits of integration host factor, a specific DNA-binding protein that functions in genetic recombination as well as in transcriptional and translational control. The polypeptide is Integration host factor subunit alpha (Shewanella woodyi (strain ATCC 51908 / MS32)).